Here is a 259-residue protein sequence, read N- to C-terminus: Flagellar L-ring protein 1 (259 aa).

The N-terminal stretch at 1–15 is a signal peptide; it reads MKRICLLALITTMSG. Cys-16 is lipidated: N-palmitoyl cysteine. Cys-16 carries the S-diacylglycerol cysteine lipid modification. Positions 38 to 63 are disordered; sequence EGDKSKDESSGIVDTLRGRNDPVAGD.

Belongs to the FlgH family. As to quaternary structure, the basal body constitutes a major portion of the flagellar organelle and consists of four rings (L,P,S, and M) mounted on a central rod.

The protein localises to the cell outer membrane. The protein resides in the bacterial flagellum basal body. In terms of biological role, assembles around the rod to form the L-ring and probably protects the motor/basal body from shearing forces during rotation. The polypeptide is Flagellar L-ring protein 1 (flgH1) (Vibrio parahaemolyticus serotype O3:K6 (strain RIMD 2210633)).